Here is a 332-residue protein sequence, read N- to C-terminus: RNA polymerase principal sigma factor HrdD (332 aa).

Residues 1–21 (MATRAVARRQPAASGETGAAG) form a disordered region. The short motif at 124 to 137 (DLIQEGNAGLVRAV) is the Polymerase core binding element. Residues 294 to 313 (LTEVGKQHGLTRERIRQIEK) constitute a DNA-binding region (H-T-H motif).

The protein belongs to the sigma-70 factor family.

Functionally, sigma factors are initiation factors that promote the attachment of RNA polymerase to specific initiation sites and are then released. The sequence is that of RNA polymerase principal sigma factor HrdD (hrdD) from Streptomyces griseus.